The primary structure comprises 205 residues: Small ribosomal subunit protein uS4 (205 aa).

Basic residues predominate over residues 1–12; that stretch reads MSKRVQAKHKLD. Residues 1-49 are disordered; sequence MSKRVQAKHKLDRRMGQNIWGRPKSPVNRREYGPGQHGQRRKGKMSDFG. In terms of domain architecture, S4 RNA-binding spans 94–155; it reads RRLDAVVYRS…ASRQLEIVVV (62 aa).

This sequence belongs to the universal ribosomal protein uS4 family. In terms of assembly, part of the 30S ribosomal subunit. Contacts protein S5. The interaction surface between S4 and S5 is involved in control of translational fidelity.

In terms of biological role, one of the primary rRNA binding proteins, it binds directly to 16S rRNA where it nucleates assembly of the body of the 30S subunit. Functionally, with S5 and S12 plays an important role in translational accuracy. The protein is Small ribosomal subunit protein uS4 of Methylorubrum extorquens (strain CM4 / NCIMB 13688) (Methylobacterium extorquens).